A 424-amino-acid chain; its full sequence is Protein pellino (424 aa).

The segment at 1 to 21 (MVKRTDGTESPILAEDGGDGH) is disordered. Phosphoserine is present on S10.

Belongs to the pellino family. In terms of assembly, interacts with pll.

Functionally, scaffold protein involved in the Toll signaling pathway via its interaction with pelle/pll kinase. This is Protein pellino (Pli) from Drosophila melanogaster (Fruit fly).